A 73-amino-acid polypeptide reads, in one-letter code: Large ribosomal subunit protein bL31 (73 aa).

Belongs to the bacterial ribosomal protein bL31 family. Type A subfamily. Part of the 50S ribosomal subunit.

Its function is as follows. Binds the 23S rRNA. The sequence is that of Large ribosomal subunit protein bL31 from Rhizobium meliloti (strain 1021) (Ensifer meliloti).